The chain runs to 112 residues: UPF0329 protein ECU11_0080 (112 aa).

It belongs to the UPF0329 family.

The chain is UPF0329 protein ECU11_0080 from Encephalitozoon cuniculi (strain GB-M1) (Microsporidian parasite).